The chain runs to 586 residues: Probable zinc metalloprotease EGY3, chloroplastic (586 aa).

The N-terminal 54 residues, 1–54, are a transit peptide targeting the chloroplast; sequence MASSSLVTSLLFSSSSSSNTATSTSSRRSFSLFSKNQYCKPRPLRRSSSRLLVR. 2 disordered regions span residues 13 to 32 and 58 to 122; these read SSSS…SFSL and QQQQ…DWRS. Positions 61–73 are enriched in basic and acidic residues; that stretch reads QEEKAAPAAESHH. Positions 103–195 form a coiled coil; the sequence is VKKSKEELEE…NTFKALDLNK (93 aa). The next 7 helical transmembrane spans lie at 287-307, 318-338, 389-409, 427-447, 454-474, 506-526, and 550-570; these read LSAV…SGFF, VSDV…SEIA, ASAY…DGSL, PLLS…GNVL, VGVP…VTSL, VALG…WGLF, and YAWG…NGGG.

This sequence belongs to the peptidase M50B family.

Its subcellular location is the plastid. It localises to the chloroplast membrane. In terms of biological role, probable membrane-associated metalloprotease that may be involved in chloroplast development. The chain is Probable zinc metalloprotease EGY3, chloroplastic (EGY3) from Oryza sativa subsp. japonica (Rice).